The following is a 421-amino-acid chain: FBD-associated F-box protein At5g56370 (421 aa).

In terms of domain architecture, F-box spans 1–52 (MDSISLLPDDFLLRILSLLPTKDVLNTSVLSKRWRYLWKLVPKLQYSLIDKN). Residues 332 to 382 (HWEEPSSVPETLMFVLETLEWRNYRGLKMENELASFLLKHSRRLKIATFSP) form the FBD domain.

This chain is FBD-associated F-box protein At5g56370, found in Arabidopsis thaliana (Mouse-ear cress).